A 428-amino-acid polypeptide reads, in one-letter code: Histone deacetylase 3 (428 aa).

A histone deacetylase region spans residues 3–316; that stretch reads KTVAYFYDPD…WTYETSLLVE (314 aa). 1D-myo-inositol 1,4,5,6-tetrakisphosphate contacts are provided by histidine 17, glycine 21, and lysine 25. Histidine 135 is a catalytic residue. Zn(2+)-binding residues include aspartate 170, histidine 172, and aspartate 259. Arginine 265 contacts 1D-myo-inositol 1,4,5,6-tetrakisphosphate. 2 stretches are compositionally biased toward basic and acidic residues: residues 388–405 and 415–428; these read DRTDEADAEERGPEENYS and DGDHDNDKESDVEI. Residues 388 to 428 form a disordered region; that stretch reads DRTDEADAEERGPEENYSRPEAPNEFYDGDHDNDKESDVEI. Position 424 is a phosphoserine (serine 424).

It belongs to the histone deacetylase family. HD type 1 subfamily. As to quaternary structure, interacts with HDAC7 and HDAC9. Interacts with DAXX, KDM4A, HDAC10 and DACH1. Found in a complex with NCOR1 and NCOR2. Component of the N-Cor repressor complex, at least composed of NCOR1, NCOR2, HDAC3, TBL1X, TBL1R, CORO2A and GPS2. Interacts with BCOR, MJD2A/JHDM3A, NRIP1, PRDM6 and SRY. Interacts with BTBD14B. Interacts with GLIS2. Interacts (via the DNA-binding domain) with NR2C1; the interaction recruits phosphorylated NR2C1 to PML bodies for sumoylation. Component of the Notch corepressor complex. Interacts with CBFA2T3 and NKAP. Interacts with APEX1; the interaction is not dependent on the acetylated status of APEX1. Interacts with ZMYND15. Interacts with SMRT/NCOR2 and BCL6 on DNA enhancer elements. Interacts with INSM1. Interacts with XBP1 isoform 1; the interaction occurs in endothelial cell (EC) under disturbed flow. Interacts (via C-terminus) with CCAR2 (via N-terminus). Interacts with and deacetylates MEF2D. Interacts with BEND3. Interacts with NKAPL. Interacts with DHX36; this interaction occurs in a RNA-dependent manner. Interacts weakly with CRY1; this interaction is enhanced in the presence of FBXL3. Interacts with FBXL3 and BMAL1. Interacts with NCOR1. Interacts with RARA. Interacts with SETD5. (Microbial infection) Interacts with human cytomegalovirus (HHV-5) immediate early protein IE1; this interaction decreases histone acetylation and allows transcriptional activation by the virus. The cofactor is Zn(2+). Sumoylated in vitro. In terms of processing, deubiquitinated on 'Lys-63'-linked ubiquitin chains by USP38; leading to a decreased level of histone acetylation. In terms of tissue distribution, widely expressed.

It is found in the nucleus. The protein resides in the chromosome. Its subcellular location is the cytoplasm. It localises to the cytosol. The catalysed reaction is N(6)-acetyl-L-lysyl-[histone] + H2O = L-lysyl-[histone] + acetate. The enzyme catalyses N(6)-acetyl-L-lysyl-[protein] + H2O = L-lysyl-[protein] + acetate. It carries out the reaction N(6)-(2E)-butenoyl-L-lysyl-[protein] + H2O = (2E)-2-butenoate + L-lysyl-[protein]. It catalyses the reaction N(6)-(2-hydroxyisobutanoyl)-L-lysyl-[protein] + H2O = 2-hydroxy-2-methylpropanoate + L-lysyl-[protein]. The catalysed reaction is N(6)-[(S)-lactoyl]-L-lysyl-[protein] + H2O = (S)-lactate + L-lysyl-[protein]. Inositol tetraphosphate (1D-myo-inositol 1,4,5,6-tetrakisphosphate) promotes the histone deacetylase activity by acting as an intermolecular glue between HDAC3 and NCOR2, thereby promoting its association with the N-Cor complex, a prerequisite for the histone deacetylase activity. Functionally, histone deacetylase that catalyzes the deacetylation of lysine residues on the N-terminal part of the core histones (H2A, H2B, H3 and H4), and some other non-histone substrates. Histone deacetylation gives a tag for epigenetic repression and plays an important role in transcriptional regulation, cell cycle progression and developmental events. Histone deacetylases act via the formation of large multiprotein complexes, such as N-Cor repressor complex, which activate the histone deacetylase activity. Participates in the BCL6 transcriptional repressor activity by deacetylating the H3 'Lys-27' (H3K27) on enhancer elements, antagonizing EP300 acetyltransferase activity and repressing proximal gene expression. Acts as a molecular chaperone for shuttling phosphorylated NR2C1 to PML bodies for sumoylation. Contributes, together with XBP1 isoform 1, to the activation of NFE2L2-mediated HMOX1 transcription factor gene expression in a PI(3)K/mTORC2/Akt-dependent signaling pathway leading to endothelial cell (EC) survival under disturbed flow/oxidative stress. Regulates both the transcriptional activation and repression phases of the circadian clock in a deacetylase activity-independent manner. During the activation phase, promotes the accumulation of ubiquitinated BMAL1 at the E-boxes and during the repression phase, blocks FBXL3-mediated CRY1/2 ubiquitination and promotes the interaction of CRY1 and BMAL1. The NCOR1-HDAC3 complex regulates the circadian expression of the core clock gene BMAL1 and the genes involved in lipid metabolism in the liver. Also functions as a deacetylase for non-histone targets, such as KAT5, MEF2D, MAPK14, RARA and STAT3. Serves as a corepressor of RARA, mediating its deacetylation and repression, leading to inhibition of RARE DNA element binding. In association with RARA, plays a role in the repression of microRNA-10a and thereby in the inflammatory response. In addition to protein deacetylase activity, also acts as a protein-lysine deacylase by recognizing other acyl groups: catalyzes removal of (2E)-butenoyl (crotonyl), lactoyl (lactyl) and 2-hydroxyisobutanoyl (2-hydroxyisobutyryl) acyl groups from lysine residues, leading to protein decrotonylation, delactylation and de-2-hydroxyisobutyrylation, respectively. Catalyzes decrotonylation of MAPRE1/EB1. Mediates delactylation NBN/NBS1, thereby inhibiting DNA double-strand breaks (DSBs) via homologous recombination (HR). This chain is Histone deacetylase 3 (HDAC3), found in Homo sapiens (Human).